The primary structure comprises 165 residues: uncharacterized protein (165 aa).

The disordered stretch occupies residues 68–107 (LEGAPEWAAPHPEEQRRSPPACSQHTPPLPSTPTGPPPCS). Positions 94–107 (PPLPSTPTGPPPCS) are enriched in pro residues.

This is an uncharacterized protein from Homo sapiens (Human).